The chain runs to 610 residues: DNA mismatch repair protein MutL (610 aa).

This sequence belongs to the DNA mismatch repair MutL/HexB family.

Functionally, this protein is involved in the repair of mismatches in DNA. It is required for dam-dependent methyl-directed DNA mismatch repair. May act as a 'molecular matchmaker', a protein that promotes the formation of a stable complex between two or more DNA-binding proteins in an ATP-dependent manner without itself being part of a final effector complex. This Rickettsia rickettsii (strain Iowa) protein is DNA mismatch repair protein MutL.